Here is a 151-residue protein sequence, read N- to C-terminus: Deoxyuridine 5'-triphosphate nucleotidohydrolase (151 aa).

Substrate is bound by residues 70–72 (RSG), Asn-83, 87–89 (LID), and Met-97.

It belongs to the dUTPase family. The cofactor is Mg(2+).

It catalyses the reaction dUTP + H2O = dUMP + diphosphate + H(+). The protein operates within pyrimidine metabolism; dUMP biosynthesis; dUMP from dCTP (dUTP route): step 2/2. Functionally, this enzyme is involved in nucleotide metabolism: it produces dUMP, the immediate precursor of thymidine nucleotides and it decreases the intracellular concentration of dUTP so that uracil cannot be incorporated into DNA. The protein is Deoxyuridine 5'-triphosphate nucleotidohydrolase of Pseudomonas fluorescens (strain Pf0-1).